Here is a 197-residue protein sequence, read N- to C-terminus: Nascent polypeptide-associated complex subunit alpha (197 aa).

Residues 1–20 are compositionally biased toward acidic residues; the sequence is MAEPVEDSVDEISSEGDSDV. Disordered stretches follow at residues 1-46 and 120-154; these read MAEP…RKLL and GADRGTDSSAAAHASGHDHAHDHDHSHGDCASKAD. In terms of domain architecture, NAC-A/B spans 36 to 101; it reads DKNERKSRKL…AKVEDMSQNS (66 aa). The segment covering 134–154 has biased composition (basic and acidic residues); that stretch reads SGHDHAHDHDHSHGDCASKAD. The region spanning 158-195 is the UBA domain; it reads VNQSDIDLVVSQVGCTREQAVEALIKNKGDIVETIMQL.

This sequence belongs to the NAC-alpha family.

In terms of biological role, may promote appropriate targeting of ribosome-nascent polypeptide complexes. The protein is Nascent polypeptide-associated complex subunit alpha of Babesia divergens.